Here is a 274-residue protein sequence, read N- to C-terminus: Large ribosomal subunit protein uL2c (274 aa).

Residues histidine 230–lysine 252 are disordered.

Belongs to the universal ribosomal protein uL2 family. As to quaternary structure, part of the 50S ribosomal subunit.

The protein resides in the plastid. The sequence is that of Large ribosomal subunit protein uL2c (rpl2) from Euglena longa (Euglenophycean alga).